A 623-amino-acid chain; its full sequence is Heterogeneous nuclear ribonucleoprotein L (623 aa).

Basic residues predominate over residues 1-16 (MSRRLLPRAEKRRRRL). The interval 1 to 97 (MSRRLLPRAE…NYDDPHKTPA (97 aa)) is disordered. Over residues 17–27 (EQRQQPDEQLR) the composition is skewed to basic and acidic residues. Low complexity predominate over residues 28–37 (RAGAMVKMAA). The span at 38–54 (AGGGGGGGRYYGGGNEG) shows a compositional bias: gly residues. Glycyl lysine isopeptide (Lys-Gly) (interchain with G-Cter in SUMO2) cross-links involve residues K59 and K62. A compositionally biased stretch (gly residues) spans 69–87 (QHGGGGGGGSGAAGGGGGE). The residue at position 98 (S98) is a Phosphoserine. The RRM 1 domain occupies 99-173 (PVVHIRGLID…HPAFVNYSTS (75 aa)). A Glycyl lysine isopeptide (Lys-Gly) (interchain with G-Cter in SUMO2) cross-link involves residue K133. Phosphoserine is present on S182. One can recognise an RRM 2 domain in the interval 190–267 (SVLLFTILNP…CTLKIEYAKP (78 aa)). K266 is subject to N6-acetyllysine. Residues 281-298 (DYTNPNLSGQGDPGSNPN) are compositionally biased toward polar residues. The disordered stretch occupies residues 281–413 (DYTNPNLSGQ…PPPPDYGPHA (133 aa)). S288 and S295 each carry phosphoserine. K299 participates in a covalent cross-link: Glycyl lysine isopeptide (Lys-Gly) (interchain with G-Cter in SUMO2). 2 positions are modified to asymmetric dimethylarginine: R388 and R392. Residues 398–409 (GHPPPPPPPPDY) show a composition bias toward pro residues. S415 is subject to Phosphoserine. RRM domains are found at residues 416–490 (PVLM…VSKQ) and 498–586 (SYGL…WDSK). A Phosphoserine; by CaMK4 modification is found at S578. A Glycyl lysine isopeptide (Lys-Gly) (interchain with G-Cter in SUMO2) cross-link involves residue K602.

Identified in a IGF2BP1-dependent mRNP granule complex containing untranslated mRNAs. Interacts with HNRNPLL. Interacts with APEX1; the interaction is DNA-dependent. Component of a complex with SETD2. Interacts with ELAVL1. Part of a transcription inhibitory ribonucleoprotein complex composed at least of the circular RNA circZNF827, ZNF827 and HNRNPK. Interacts with CHD8 in an RNA-dependent manner. In terms of processing, several isoelectric forms of the L protein are probably the results of post-translational modifications. Post-translationally, phosphorylation at Ser-578 by CaMK4 enhances interaction with a CaMK4-responsive RNA element (CaRRE1), and prevents inclusion of the stress axis-regulated exon (STREX) of the KCNMA1 potassium channel transcripts upon membrane depolarization.

Its subcellular location is the nucleus. The protein localises to the nucleoplasm. It localises to the cytoplasm. Its function is as follows. Splicing factor binding to exonic or intronic sites and acting as either an activator or repressor of exon inclusion. Exhibits a binding preference for CA-rich elements. Component of the heterogeneous nuclear ribonucleoprotein (hnRNP) complexes and associated with most nascent transcripts. Associates, together with APEX1, to the negative calcium responsive element (nCaRE) B2 of the APEX2 promoter. As part of a ribonucleoprotein complex composed at least of ZNF827, HNRNPK and the circular RNA circZNF827 that nucleates the complex on chromatin, may negatively regulate the transcription of genes involved in neuronal differentiation. Regulates alternative splicing of a core group of genes involved in neuronal differentiation, likely by mediating H3K36me3-coupled transcription elongation and co-transcriptional RNA processing via interaction with CHD8. This chain is Heterogeneous nuclear ribonucleoprotein L, found in Rattus norvegicus (Rat).